We begin with the raw amino-acid sequence, 872 residues long: Alanine--tRNA ligase (872 aa).

Zn(2+) is bound by residues His567, His571, Cys669, and His673.

Belongs to the class-II aminoacyl-tRNA synthetase family. It depends on Zn(2+) as a cofactor.

The protein resides in the cytoplasm. The catalysed reaction is tRNA(Ala) + L-alanine + ATP = L-alanyl-tRNA(Ala) + AMP + diphosphate. Its function is as follows. Catalyzes the attachment of alanine to tRNA(Ala) in a two-step reaction: alanine is first activated by ATP to form Ala-AMP and then transferred to the acceptor end of tRNA(Ala). Also edits incorrectly charged Ser-tRNA(Ala) and Gly-tRNA(Ala) via its editing domain. This Streptococcus pyogenes serotype M4 (strain MGAS10750) protein is Alanine--tRNA ligase.